We begin with the raw amino-acid sequence, 344 residues long: uncharacterized protein (344 aa).

The interval 190 to 232 (SGKRVRSAKKSGADAARASEGATCDRASSESVSPTARPPAQAS) is disordered.

This is an uncharacterized protein from Treponema pallidum (strain Nichols).